The primary structure comprises 75 residues: Large ribosomal subunit protein bL28 (75 aa).

The segment at 1–21 is disordered; it reads MARVCQVTGKRPMSGNKRSHA.

This sequence belongs to the bacterial ribosomal protein bL28 family.

This Blochmanniella pennsylvanica (strain BPEN) protein is Large ribosomal subunit protein bL28.